The primary structure comprises 171 residues: 3-hydroxydecanoyl-[acyl-carrier-protein] dehydratase (171 aa).

H69 is a catalytic residue.

It belongs to the thioester dehydratase family. FabA subfamily. Homodimer.

Its subcellular location is the cytoplasm. It catalyses the reaction a (3R)-hydroxyacyl-[ACP] = a (2E)-enoyl-[ACP] + H2O. It carries out the reaction (3R)-hydroxydecanoyl-[ACP] = (2E)-decenoyl-[ACP] + H2O. The catalysed reaction is (2E)-decenoyl-[ACP] = (3Z)-decenoyl-[ACP]. It functions in the pathway lipid metabolism; fatty acid biosynthesis. Functionally, necessary for the introduction of cis unsaturation into fatty acids. Catalyzes the dehydration of (3R)-3-hydroxydecanoyl-ACP to E-(2)-decenoyl-ACP and then its isomerization to Z-(3)-decenoyl-ACP. Can catalyze the dehydratase reaction for beta-hydroxyacyl-ACPs with saturated chain lengths up to 16:0, being most active on intermediate chain length. This Caulobacter sp. (strain K31) protein is 3-hydroxydecanoyl-[acyl-carrier-protein] dehydratase.